The following is a 360-amino-acid chain: Phospho-N-acetylmuramoyl-pentapeptide-transferase (360 aa).

The next 10 helical transmembrane spans lie at 27–47, 71–91, 93–113, 128–148, 168–188, 199–219, 239–259, 262–282, 288–308, and 337–357; these read GAMI…INSL, TPTM…LLWA, LASV…AIGF, FSGK…AFTI, LVIN…VGAG, GLAI…AYLS, LAVV…FNAP, AIFM…TVAV, IVLA…IIQV, and QVVI…LSTL.

This sequence belongs to the glycosyltransferase 4 family. MraY subfamily. Mg(2+) is required as a cofactor.

It is found in the cell inner membrane. It catalyses the reaction UDP-N-acetyl-alpha-D-muramoyl-L-alanyl-gamma-D-glutamyl-meso-2,6-diaminopimeloyl-D-alanyl-D-alanine + di-trans,octa-cis-undecaprenyl phosphate = di-trans,octa-cis-undecaprenyl diphospho-N-acetyl-alpha-D-muramoyl-L-alanyl-D-glutamyl-meso-2,6-diaminopimeloyl-D-alanyl-D-alanine + UMP. It functions in the pathway cell wall biogenesis; peptidoglycan biosynthesis. Functionally, catalyzes the initial step of the lipid cycle reactions in the biosynthesis of the cell wall peptidoglycan: transfers peptidoglycan precursor phospho-MurNAc-pentapeptide from UDP-MurNAc-pentapeptide onto the lipid carrier undecaprenyl phosphate, yielding undecaprenyl-pyrophosphoryl-MurNAc-pentapeptide, known as lipid I. The chain is Phospho-N-acetylmuramoyl-pentapeptide-transferase from Brucella abortus (strain S19).